We begin with the raw amino-acid sequence, 418 residues long: CCA-adding enzyme (418 aa).

ATP contacts are provided by serine 54 and arginine 57. Residues serine 54 and arginine 57 each coordinate CTP. Mg(2+)-binding residues include aspartate 66, aspartate 68, and aspartate 118. Residues histidine 141, lysine 161, and tyrosine 170 each contribute to the ATP site. Histidine 141, lysine 161, and tyrosine 170 together coordinate CTP.

This sequence belongs to the tRNA nucleotidyltransferase/poly(A) polymerase family. Archaeal CCA-adding enzyme subfamily. In terms of assembly, homodimer. The cofactor is Mg(2+).

It carries out the reaction a tRNA precursor + 2 CTP + ATP = a tRNA with a 3' CCA end + 3 diphosphate. The catalysed reaction is a tRNA with a 3' CCA end + 2 CTP + ATP = a tRNA with a 3' CCACCA end + 3 diphosphate. Functionally, catalyzes the addition and repair of the essential 3'-terminal CCA sequence in tRNAs without using a nucleic acid template. Adds these three nucleotides in the order of C, C, and A to the tRNA nucleotide-73, using CTP and ATP as substrates and producing inorganic pyrophosphate. tRNA 3'-terminal CCA addition is required both for tRNA processing and repair. Also involved in tRNA surveillance by mediating tandem CCA addition to generate a CCACCA at the 3' terminus of unstable tRNAs. While stable tRNAs receive only 3'-terminal CCA, unstable tRNAs are marked with CCACCA and rapidly degraded. The protein is CCA-adding enzyme of Pyrobaculum islandicum (strain DSM 4184 / JCM 9189 / GEO3).